Consider the following 309-residue polypeptide: Olfactory receptor 4A47 (309 aa).

Topologically, residues 1 to 23 (MEPRKNVTDFVLLGFTQNPKEQK) are extracellular. Asn6 carries an N-linked (GlcNAc...) asparagine glycan. A helical membrane pass occupies residues 24–47 (VLFVMFLLFYILTMVGNLLIVVTV). The Cytoplasmic segment spans residues 48–55 (TVSETLGS). Residues 56–77 (PMYFFLAGLSFIDIIYSSSISP) traverse the membrane as a helical segment. Residues 78-98 (RLISGLFFGNNSISFQSCMAQ) are Extracellular-facing. An N-linked (GlcNAc...) asparagine glycan is attached at Asn87. An intrachain disulfide couples Cys95 to Cys187. The helical transmembrane segment at 99–118 (LFIEHIFGGSEVFLLLVMAY) threads the bilayer. At 119 to 137 (DCYVAICKPLHYLVIMRQW) the chain is on the cytoplasmic side. The chain crosses the membrane as a helical span at residues 138–156 (VCVVLLVVSWVGGFLHSVF). Residues 157 to 193 (QLSIIYGLPFCGPNVIDHFFCDMYPLLKLVCTDTHAI) are Extracellular-facing. Residues 194–217 (GLLVVANGGLACTIVFLLLLISYG) form a helical membrane-spanning segment. Residues 218–233 (VILHSLKNLSQKGRQK) are Cytoplasmic-facing. Residues 234-256 (ALSTCSSHMTVVVFFFVPCIFMY) form a helical membrane-spanning segment. Over 257 to 267 (ARPARTFPIDK) the chain is Extracellular. Residues 268 to 287 (SVSVFYTVITPMLNPLIYTL) traverse the membrane as a helical segment. Residues 288–309 (RNSEMTSAMKKLWRRDLISSST) lie on the Cytoplasmic side of the membrane.

This sequence belongs to the G-protein coupled receptor 1 family.

Its subcellular location is the cell membrane. Its function is as follows. Odorant receptor. The sequence is that of Olfactory receptor 4A47 (OR4A47) from Homo sapiens (Human).